A 208-amino-acid chain; its full sequence is Ribosomal RNA large subunit methyltransferase E (208 aa).

Positions 61, 63, 81, 97, and 122 each coordinate S-adenosyl-L-methionine. Lys162 functions as the Proton acceptor in the catalytic mechanism.

It belongs to the class I-like SAM-binding methyltransferase superfamily. RNA methyltransferase RlmE family.

It is found in the cytoplasm. The enzyme catalyses uridine(2552) in 23S rRNA + S-adenosyl-L-methionine = 2'-O-methyluridine(2552) in 23S rRNA + S-adenosyl-L-homocysteine + H(+). In terms of biological role, specifically methylates the uridine in position 2552 of 23S rRNA at the 2'-O position of the ribose in the fully assembled 50S ribosomal subunit. The polypeptide is Ribosomal RNA large subunit methyltransferase E (Pseudomonas putida (strain GB-1)).